Here is a 418-residue protein sequence, read N- to C-terminus: Glutamyl-tRNA reductase (418 aa).

Substrate is bound by residues 49-52, Ser105, 110-112, and Gln116; these read TCNR and EPQ. The Nucleophile role is filled by Cys50. Position 185 to 190 (185 to 190) interacts with NADP(+); the sequence is GAGEMI.

This sequence belongs to the glutamyl-tRNA reductase family. As to quaternary structure, homodimer.

The enzyme catalyses (S)-4-amino-5-oxopentanoate + tRNA(Glu) + NADP(+) = L-glutamyl-tRNA(Glu) + NADPH + H(+). The protein operates within porphyrin-containing compound metabolism; protoporphyrin-IX biosynthesis; 5-aminolevulinate from L-glutamyl-tRNA(Glu): step 1/2. Its function is as follows. Catalyzes the NADPH-dependent reduction of glutamyl-tRNA(Glu) to glutamate 1-semialdehyde (GSA). The chain is Glutamyl-tRNA reductase from Aromatoleum aromaticum (strain DSM 19018 / LMG 30748 / EbN1) (Azoarcus sp. (strain EbN1)).